The primary structure comprises 484 residues: MFPNSILGRPPFTPTHQQHNNFFALSPTLYSHQQLIDAQFNFQNVDLSRAVSLQPLTYGTVSPIQTSTSPLFRGRKRISDEKAFPLDGKRQRFHSPHQEPTIINQLVPLSGDRRYSMPPLFHTHYIPDIVRCVPPLREIPLLEPREITLPEAKDKLSQQILELFETCQQQASDLKKKELCRAQLQREIQLLFPQSRLFLVGSSLNGFGARSSDGDLCLVVKEEPCFFQVNQKTEARHILTLVHKHFCTRLSGYIERPQLIRAKVPIVKFRDKVSCVEFDLNVNNTVGIRNTFLLRTYAYLENRVRPLVLVIKKWASHHDINDASRGTLSSYSLVLMVLHYLQTLPEPILPSLQKIYPESFSTSVQLHLVHHAPCNVPPYLSKNESSLGDLLLGFLKYYATEFDWNTQMISVREAKAIPRPDDMEWRNKYICVEEPFDGTNTARAVHEKQKFDMIKDQFLKSWQRLKNKRDLNSVLPLRAATLKR.

Phosphoserine occurs at positions 62 and 69. The Nuclear localization signal signature appears at 76–92 (KRISDEKAFPLDGKRQR). Phosphoserine is present on S95. D213 and D215 together coordinate Mg(2+). One can recognise a PAP-associated domain in the interval 386–440 (SLGDLLLGFLKYYATEFDWNTQMISVREAKAIPRPDDMEWRNKYICVEEPFDGTN).

It belongs to the DNA polymerase type-B-like family. GLD2 subfamily. As to quaternary structure, interacts with CPEB1, CPEB2, CPSF1 and PABPC1. Interacts with QKI isoform QKI7; promoting recruitment to miRNA miR-122 and miR-122 stabilization. Requires Mg(2+) as cofactor. The cofactor is Mn(2+). As to expression, ubiquitous. In brain, it is highly expressed in the cerebral cortex, cerebellum, hippocampus and olfactory bulb.

It localises to the cytoplasm. Its subcellular location is the nucleus. It carries out the reaction RNA(n) + ATP = RNA(n)-3'-adenine ribonucleotide + diphosphate. Functionally, cytoplasmic poly(A) RNA polymerase that adds successive AMP monomers to the 3'-end of specific RNAs, forming a poly(A) tail. In contrast to the canonical nuclear poly(A) RNA polymerase, it only adds poly(A) to selected cytoplasmic mRNAs. Does not play a role in replication-dependent histone mRNA degradation. Adds a single nucleotide to the 3' end of specific miRNAs, monoadenylation stabilizes and prolongs the activity of some but not all miRNAs. The polypeptide is Poly(A) RNA polymerase GLD2 (Tent2) (Mus musculus (Mouse)).